The chain runs to 175 residues: Transcriptional activatory protein BadR (175 aa).

In terms of domain architecture, HTH marR-type spans 20–156 (ANRLFFRLYQ…TLHYLLKILD (137 aa)).

Transcriptional activator of genes for the anaerobic degradation of benzoate. In Rhodopseudomonas palustris (strain ATCC BAA-98 / CGA009), this protein is Transcriptional activatory protein BadR (badR).